A 122-amino-acid polypeptide reads, in one-letter code: Fluoride-specific ion channel FluC (122 aa).

4 helical membrane passes run 4–24, 36–56, 65–85, and 100–120; these read ILLI…VSGI, LIVN…SLFG, FIIT…YESF, and ILLN…ASMF. The Na(+) site is built by Gly-72 and Thr-75.

The protein belongs to the fluoride channel Fluc/FEX (TC 1.A.43) family.

Its subcellular location is the cell membrane. It carries out the reaction fluoride(in) = fluoride(out). Na(+) is not transported, but it plays an essential structural role and its presence is essential for fluoride channel function. Its function is as follows. Fluoride-specific ion channel. Important for reducing fluoride concentration in the cell, thus reducing its toxicity. In Methanococcus maripaludis (strain DSM 14266 / JCM 13030 / NBRC 101832 / S2 / LL), this protein is Fluoride-specific ion channel FluC.